A 463-amino-acid polypeptide reads, in one-letter code: General transcription factor IIH subunit 4 (463 aa).

Belongs to the TFB2 family. As to quaternary structure, component of the 7-subunit TFIIH core complex composed of XPB/ERCC3, XPD/ERCC2, GTF2H1, GTF2H2, GTF2H3, GTF2H4 and GTF2H5, which is active in NER. The core complex associates with the 3-subunit CDK-activating kinase (CAK) module composed of CCNH/cyclin H, CDK7 and MNAT1 to form the 10-subunit holoenzyme (holo-TFIIH) active in transcription. Part of TBP-based Pol II pre-initiation complex (PIC), in which Pol II core assembles with general transcription factors and other specific initiation factors including GTF2E1, GTF2E2, GTF2F1, GTF2F2, TCEA1, ERCC2, ERCC3, GTF2H2, GTF2H3, GTF2H4, GTF2H5, GTF2A1, GTF2A2, GTF2B and TBP; this large multi-subunit PIC complex mediates DNA unwinding and targets Pol II core to the transcription start site where the first phosphodiester bond forms.

It is found in the nucleus. Component of the general transcription and DNA repair factor IIH (TFIIH) core complex, which is involved in general and transcription-coupled nucleotide excision repair (NER) of damaged DNA and, when complexed to CAK, in RNA transcription by RNA polymerase II. In NER, TFIIH acts by opening DNA around the lesion to allow the excision of the damaged oligonucleotide and its replacement by a new DNA fragment. In transcription, TFIIH has an essential role in transcription initiation. When the pre-initiation complex (PIC) has been established, TFIIH is required for promoter opening and promoter escape. Phosphorylation of the C-terminal tail (CTD) of the largest subunit of RNA polymerase II by the kinase module CAK controls the initiation of transcription. This chain is General transcription factor IIH subunit 4 (Gtf2h4), found in Mus musculus (Mouse).